The chain runs to 273 residues: 4-hydroxy-tetrahydrodipicolinate reductase (273 aa).

Residues 12 to 17 (GAGGRM) and Glu-38 each bind NAD(+). Arg-39 is an NADP(+) binding site. NAD(+) is bound by residues 102–104 (GTT) and 126–129 (AANF). The active-site Proton donor/acceptor is the His-159. His-160 provides a ligand contact to (S)-2,3,4,5-tetrahydrodipicolinate. The Proton donor role is filled by Lys-163. A (S)-2,3,4,5-tetrahydrodipicolinate-binding site is contributed by 169-170 (GT).

It belongs to the DapB family. As to quaternary structure, homotetramer.

The protein localises to the cytoplasm. The catalysed reaction is (S)-2,3,4,5-tetrahydrodipicolinate + NAD(+) + H2O = (2S,4S)-4-hydroxy-2,3,4,5-tetrahydrodipicolinate + NADH + H(+). It carries out the reaction (S)-2,3,4,5-tetrahydrodipicolinate + NADP(+) + H2O = (2S,4S)-4-hydroxy-2,3,4,5-tetrahydrodipicolinate + NADPH + H(+). It participates in amino-acid biosynthesis; L-lysine biosynthesis via DAP pathway; (S)-tetrahydrodipicolinate from L-aspartate: step 4/4. Catalyzes the conversion of 4-hydroxy-tetrahydrodipicolinate (HTPA) to tetrahydrodipicolinate. This Salmonella agona (strain SL483) protein is 4-hydroxy-tetrahydrodipicolinate reductase.